The following is a 374-amino-acid chain: Ribosomal RNA large subunit methyltransferase G (374 aa).

Belongs to the methyltransferase superfamily. RlmG family.

It localises to the cytoplasm. It carries out the reaction guanosine(1835) in 23S rRNA + S-adenosyl-L-methionine = N(2)-methylguanosine(1835) in 23S rRNA + S-adenosyl-L-homocysteine + H(+). Functionally, specifically methylates the guanine in position 1835 (m2G1835) of 23S rRNA. The polypeptide is Ribosomal RNA large subunit methyltransferase G (Pseudomonas entomophila (strain L48)).